We begin with the raw amino-acid sequence, 186 residues long: MGNLQQLALDADIAAVKQQEKLLRLPEFNEDIAWQLGSYIRQIAVQKNYPIAITVARFNQPLFYCAMPNSSPDNKNWLRRKAATVAHYYTSSYAVGLKLKKKGVTTLSGYGLDDKDYATHGGAFPITVEKAGIVGYIAVSGLDQRDDHALVVQALAVHLGLPAEKTALEYLTQDSLGKARLDETIV.

The protein belongs to the UPF0303 family.

This is UPF0303 protein ZMO1353 from Zymomonas mobilis subsp. mobilis (strain ATCC 31821 / ZM4 / CP4).